Here is a 328-residue protein sequence, read N- to C-terminus: tRNA U34 carboxymethyltransferase (328 aa).

Carboxy-S-adenosyl-L-methionine-binding positions include Lys91, Trp105, Lys110, Gly130, Asp152–Ser154, Met196, Tyr200, and Arg315.

It belongs to the class I-like SAM-binding methyltransferase superfamily. CmoB family. In terms of assembly, homotetramer.

The catalysed reaction is carboxy-S-adenosyl-L-methionine + 5-hydroxyuridine(34) in tRNA = 5-carboxymethoxyuridine(34) in tRNA + S-adenosyl-L-homocysteine + H(+). Catalyzes carboxymethyl transfer from carboxy-S-adenosyl-L-methionine (Cx-SAM) to 5-hydroxyuridine (ho5U) to form 5-carboxymethoxyuridine (cmo5U) at position 34 in tRNAs. The protein is tRNA U34 carboxymethyltransferase of Psychromonas ingrahamii (strain DSM 17664 / CCUG 51855 / 37).